We begin with the raw amino-acid sequence, 181 residues long: Methanesulfonate monooxygenase hydroxylase subunit beta (181 aa).

It belongs to the bacterial ring-hydroxylating dioxygenase beta subunit family. The MSA monooxygenase system consists of 4 proteins: the 2 subunits of the hydroxylase component (MsmA and MsmB), a ferredoxin (MsmC) and a ferredoxin reductase (MsmD). The hydroxylase component consists of a 3 alpha (MsmA) and 3 beta (MsmB) subunits.

The protein localises to the cytoplasm. It carries out the reaction methanesulfonate + NADH + O2 = sulfite + formaldehyde + NAD(+) + H2O. Its activity is regulated as follows. MSAMO is inhibited by metal chelators (such as bathophenanthroline, bathocuprione, neocuprione, alpha-alpha-dipyridil and sodium EDTA) and by sodium azide, sodium arsenate and potassium cyanide. Methanesulfonate monooxygenase (MSAMO) mediates the primary degradation of methanesulfonic acid (MSA) to produce formaldehyd and inorganic sulfite by initial hydroxylation of the carbon atom prior to spontaneous cleavage of the unstable hydroxymethanesulfonic acid. MSAMO has a restricted substrate range that includes only the short-chain aliphatic sulfonates (methane- to butanesulfonate) and excludes all larger molecules, such as arylsulfonates and aromatic sulfonates. All MSAMO components are required for enzyme activity. The chain is Methanesulfonate monooxygenase hydroxylase subunit beta from Methylosulfonomonas methylovora.